Here is a 376-residue protein sequence, read N- to C-terminus: Probable allantoicase (376 aa).

Belongs to the allantoicase family.

It carries out the reaction allantoate + H2O = (S)-ureidoglycolate + urea. It participates in nitrogen metabolism; (S)-allantoin degradation; (S)-ureidoglycolate from allantoate (aminidohydrolase route): step 1/1. This is Probable allantoicase from Streptomyces avermitilis (strain ATCC 31267 / DSM 46492 / JCM 5070 / NBRC 14893 / NCIMB 12804 / NRRL 8165 / MA-4680).